Consider the following 537-residue polypeptide: 5,6-dihydroxyindole-2-carboxylic acid oxidase (537 aa).

An N-terminal signal peptide occupies residues 1–24 (MKSYNVLPLAYISLFLMLFYQVWA). Over 25-477 (QFPRECANIE…WPGQEFTVSE (453 aa)) the chain is Lumenal, melanosome. Cystine bridges form between cysteine 30/cysteine 41, cysteine 42/cysteine 65, cysteine 56/cysteine 99, cysteine 101/cysteine 110, and cysteine 113/cysteine 122. Asparagine 96 and asparagine 104 each carry an N-linked (GlcNAc...) asparagine glycan. Asparagine 181 carries N-linked (GlcNAc...) asparagine glycosylation. Residues histidine 192, histidine 215, and histidine 224 each contribute to the Zn(2+) site. 2 disulfides stabilise this stretch: cysteine 258/cysteine 261 and cysteine 290/cysteine 303. Asparagine 304 and asparagine 350 each carry an N-linked (GlcNAc...) asparagine glycan. Histidine 377 and histidine 381 together coordinate Zn(2+). Asparagine 385 carries an N-linked (GlcNAc...) asparagine glycan. A Zn(2+)-binding site is contributed by histidine 404. Residues 478-501 (IITIAVVAALLLVAAIFGVASCLI) form a helical membrane-spanning segment. The Cytoplasmic portion of the chain corresponds to 502 to 537 (RSRSTKNEANQPLLTDHYQRYAEDYEELPNPNHSMV).

This sequence belongs to the tyrosinase family. In terms of assembly, monomer. Interacts with ATP7A. Interacts with SLC45A2. Requires Cu(2+) as cofactor. The cofactor is Zn(2+). In terms of processing, glycosylated. In terms of tissue distribution, pigment cells.

It localises to the melanosome membrane. It catalyses the reaction 2 5,6-dihydroxyindole-2-carboxylate + O2 = 2 indole-5,6-quinone-2-carboxylate + 2 H2O. It functions in the pathway pigment biosynthesis; melanin biosynthesis. Plays a role in melanin biosynthesis. Catalyzes the oxidation of 5,6-dihydroxyindole-2-carboxylic acid (DHICA) into indole-5,6-quinone-2-carboxylic acid. May regulate or influence the type of melanin synthesized. Also to a lower extent, capable of hydroxylating tyrosine and producing melanin. The sequence is that of 5,6-dihydroxyindole-2-carboxylic acid oxidase (Tyrp1) from Mus musculus (Mouse).